Consider the following 405-residue polypeptide: L-carnitine CoA-transferase (405 aa).

Positions 97 and 104 each coordinate CoA. The active-site Nucleophile is aspartate 169.

Belongs to the CoA-transferase III family. CaiB subfamily. Homodimer.

It localises to the cytoplasm. The enzyme catalyses crotonobetainyl-CoA + (R)-carnitine = crotonobetaine + (R)-carnitinyl-CoA. It catalyses the reaction 4-(trimethylamino)butanoyl-CoA + (R)-carnitine = (R)-carnitinyl-CoA + 4-(trimethylamino)butanoate. It functions in the pathway amine and polyamine metabolism; carnitine metabolism. Catalyzes the reversible transfer of the CoA moiety from gamma-butyrobetainyl-CoA to L-carnitine to generate L-carnitinyl-CoA and gamma-butyrobetaine. Is also able to catalyze the reversible transfer of the CoA moiety from gamma-butyrobetainyl-CoA or L-carnitinyl-CoA to crotonobetaine to generate crotonobetainyl-CoA. This chain is L-carnitine CoA-transferase, found in Escherichia coli O139:H28 (strain E24377A / ETEC).